The chain runs to 253 residues: Triosephosphate isomerase (253 aa).

Residue 8-10 (NWK) participates in substrate binding. His-93 acts as the Electrophile in catalysis. The active-site Proton acceptor is the Glu-165. Substrate is bound by residues Gly-171, Ser-210, and 231–232 (GG).

Belongs to the triosephosphate isomerase family. Homodimer.

Its subcellular location is the cytoplasm. The catalysed reaction is D-glyceraldehyde 3-phosphate = dihydroxyacetone phosphate. It participates in carbohydrate biosynthesis; gluconeogenesis. The protein operates within carbohydrate degradation; glycolysis; D-glyceraldehyde 3-phosphate from glycerone phosphate: step 1/1. Involved in the gluconeogenesis. Catalyzes stereospecifically the conversion of dihydroxyacetone phosphate (DHAP) to D-glyceraldehyde-3-phosphate (G3P). This Francisella tularensis subsp. mediasiatica (strain FSC147) protein is Triosephosphate isomerase.